A 281-amino-acid chain; its full sequence is 2-dehydro-3-deoxyphosphooctonate aldolase (281 aa).

The protein belongs to the KdsA family.

It is found in the cytoplasm. It catalyses the reaction D-arabinose 5-phosphate + phosphoenolpyruvate + H2O = 3-deoxy-alpha-D-manno-2-octulosonate-8-phosphate + phosphate. Its pathway is carbohydrate biosynthesis; 3-deoxy-D-manno-octulosonate biosynthesis; 3-deoxy-D-manno-octulosonate from D-ribulose 5-phosphate: step 2/3. It functions in the pathway bacterial outer membrane biogenesis; lipopolysaccharide biosynthesis. In Janthinobacterium sp. (strain Marseille) (Minibacterium massiliensis), this protein is 2-dehydro-3-deoxyphosphooctonate aldolase.